A 1371-amino-acid chain; its full sequence is DNA-directed RNA polymerase subunit beta (1371 aa).

Belongs to the RNA polymerase beta chain family. As to quaternary structure, the RNAP catalytic core consists of 2 alpha, 1 beta, 1 beta' and 1 omega subunit. When a sigma factor is associated with the core the holoenzyme is formed, which can initiate transcription.

It carries out the reaction RNA(n) + a ribonucleoside 5'-triphosphate = RNA(n+1) + diphosphate. Its function is as follows. DNA-dependent RNA polymerase catalyzes the transcription of DNA into RNA using the four ribonucleoside triphosphates as substrates. The sequence is that of DNA-directed RNA polymerase subunit beta from Citrifermentans bemidjiense (strain ATCC BAA-1014 / DSM 16622 / JCM 12645 / Bem) (Geobacter bemidjiensis).